The sequence spans 361 residues: Septin-2 (361 aa).

The residue at position 17 (Tyr-17) is a Phosphotyrosine. One can recognise a Septin-type G domain in the interval 34 to 306; that stretch reads KGFEFTLMVV…ENFRSERLKR (273 aa). A G1 motif region spans residues 44-51; it reads GESGLGKS. Residues 44 to 51, Thr-78, Gly-104, and 183 to 191 contribute to the GTP site; these read GESGLGKS and KADTLTLKE. Residues 101 to 104 form a G3 motif region; that stretch reads DTPG. Residues 182–185 are G4 motif; that stretch reads AKAD. At Lys-190 the chain carries N6-acetyllysine. Tyr-211 carries the post-translational modification Phosphotyrosine. Position 218 is a phosphoserine (Ser-218). GTP contacts are provided by Gly-241 and Arg-256. Positions 260–270 are important for dimerization; that stretch reads WGVVEVENPEH.

This sequence belongs to the TRAFAC class TrmE-Era-EngA-EngB-Septin-like GTPase superfamily. Septin GTPase family. In terms of assembly, septins polymerize into heterooligomeric protein complexes that form filaments, and associate with cellular membranes, actin filaments and microtubules. GTPase activity is required for filament formation. Filaments are assembled from asymmetrical heterotrimers, composed of SEPTIN2, SEPTIN6 and SEPTIN7 that associate head-to-head to form a hexameric unit. Interaction between SEPTIN2 and SEPTIN7 seems indirect. Interacts with SEPTIN5. Interaction with SEPTIN4 not detected. Interacts with SEPTIN9. Component of a septin core octameric complex consisting of SEPTIN12, SEPTIN7, SEPTIN6 and SEPTIN2 or SEPTIN4 in the order 12-7-6-2-2-6-7-12 or 12-7-6-4-4-6-7-12 and located in the sperm annulus. Interacts with MAP4. Interacts with DZIP1L.

It localises to the cytoplasm. The protein localises to the cytoskeleton. It is found in the spindle. Its subcellular location is the chromosome. The protein resides in the centromere. It localises to the kinetochore. The protein localises to the cleavage furrow. It is found in the midbody. Its subcellular location is the cell cortex. The protein resides in the cell projection. It localises to the cilium membrane. The protein localises to the cilium. It is found in the flagellum. Filament-forming cytoskeletal GTPase. Forms a filamentous structure with SEPTIN12, SEPTIN6, SEPTIN2 and probably SEPTIN4 at the sperm annulus which is required for the structural integrity and motility of the sperm tail during postmeiotic differentiation. Required for normal organization of the actin cytoskeleton. Plays a role in the biogenesis of polarized columnar-shaped epithelium by maintaining polyglutamylated microtubules, thus facilitating efficient vesicle transport, and by impeding MAP4 binding to tubulin. Required for the progression through mitosis. Forms a scaffold at the midplane of the mitotic splindle required to maintain CENPE localization at kinetochores and consequently chromosome congression. During anaphase, may be required for chromosome segregation and spindle elongation. Plays a role in ciliogenesis and collective cell movements. In cilia, required for the integrity of the diffusion barrier at the base of the primary cilium that prevents diffusion of transmembrane proteins between the cilia and plasma membranes: probably acts by regulating the assembly of the tectonic-like complex (also named B9 complex) by localizing TMEM231 protein. This chain is Septin-2, found in Bos taurus (Bovine).